The primary structure comprises 264 residues: Tritrans,polycis-undecaprenyl-diphosphate synthase (geranylgeranyl-diphosphate specific) (264 aa).

Residue D43 is part of the active site. D43 is a binding site for Mg(2+). Substrate contacts are provided by residues 44–47, W48, H60, and 88–90; these read GNRR and STE. N91 acts as the Proton acceptor in catalysis. Substrate-binding positions include F92, R94, R213, and 219–221; that span reads RIS. E232 contacts Mg(2+).

The protein belongs to the UPP synthase family. Homodimer. It depends on Mg(2+) as a cofactor.

It carries out the reaction geranylgeranyl diphosphate + 7 isopentenyl diphosphate = tri-trans,hepta-cis-undecaprenyl diphosphate + 7 diphosphate. Catalyzes the sequential condensation of isopentenyl diphosphate (IPP) with geranylgeranyl diphosphate (GGPP) to yield (2Z,6Z,10Z,14Z,18Z,22Z,26Z,30E,34E,38E)-undecaprenyl diphosphate (tritrans,heptacis-UPP). It is probably the precursor of glycosyl carrier lipids. This is Tritrans,polycis-undecaprenyl-diphosphate synthase (geranylgeranyl-diphosphate specific) from Thermococcus kodakarensis (strain ATCC BAA-918 / JCM 12380 / KOD1) (Pyrococcus kodakaraensis (strain KOD1)).